A 484-amino-acid chain; its full sequence is Solute carrier family 40 member 1 (484 aa).

11 helical membrane passes run 58 to 78 (LLTAVYGVVEASAVAALGPIV), 94 to 114 (WLLLQGASFVAAGVSVTALLV), 123 to 143 (GFPAFVALVVVTNVSGALAAL), 189 to 209 (VLSGFFISFVSMEASAAALAA), 212 to 232 (LAAVWVQYWLFVSVYAGFPAL), 279 to 299 (VVLPGVALAFLYFTVLSFGTL), 308 to 328 (GIPAYVISLARGVSAAVGIAA), 346 to 366 (LWSIWAQWCCLLVCVASVWAG), 377 to 397 (LMGGVAASRLGLWMFDLAVMQ), 413 to 433 (GVQNSLQSMFDLLTYVMGIIV), and 442 to 462 (LIVLSFFLVTCAAAMYTMHVY).

This sequence belongs to the ferroportin (FP) (TC 2.A.100) family. SLC40A subfamily.

The protein localises to the membrane. May be involved in iron transport and iron homeostasis. This chain is Solute carrier family 40 member 1, found in Oryza sativa subsp. japonica (Rice).